The primary structure comprises 373 residues: Probable protein phosphatase 2C 73 (373 aa).

A PPM-type phosphatase domain is found at 61–354 (LASLFSKRGE…DDMSVVCLFL (294 aa)). Residues aspartate 97, glycine 98, aspartate 299, and aspartate 345 each coordinate Mn(2+).

This sequence belongs to the PP2C family. The cofactor is Mg(2+). Mn(2+) serves as cofactor.

The catalysed reaction is O-phospho-L-seryl-[protein] + H2O = L-seryl-[protein] + phosphate. It carries out the reaction O-phospho-L-threonyl-[protein] + H2O = L-threonyl-[protein] + phosphate. In Arabidopsis thaliana (Mouse-ear cress), this protein is Probable protein phosphatase 2C 73 (PPC6-7).